The chain runs to 350 residues: Phosphotriesterase-related protein (350 aa).

A divalent metal cation contacts are provided by H22, H24, E169, H201, H230, and D298.

It belongs to the metallo-dependent hydrolases superfamily. Phosphotriesterase family. It depends on a divalent metal cation as a cofactor.

The sequence is that of Phosphotriesterase-related protein from Drosophila erecta (Fruit fly).